We begin with the raw amino-acid sequence, 364 residues long: Ribosomal RNA large subunit methyltransferase F (364 aa).

A compositionally biased stretch (low complexity) spans 1 to 17 (MPKPAIKTAAKPATSSA). The tract at residues 1–53 (MPKPAIKTAAKPATSSAGKRGKPITPKSVAKPQAAKPKTVSKPKVKPGEKKRL) is disordered. Residues 39–53 (TVSKPKVKPGEKKRL) are compositionally biased toward basic residues.

Belongs to the methyltransferase superfamily. METTL16/RlmF family.

It localises to the cytoplasm. It catalyses the reaction adenosine(1618) in 23S rRNA + S-adenosyl-L-methionine = N(6)-methyladenosine(1618) in 23S rRNA + S-adenosyl-L-homocysteine + H(+). In terms of biological role, specifically methylates the adenine in position 1618 of 23S rRNA. The polypeptide is Ribosomal RNA large subunit methyltransferase F (Shewanella sp. (strain MR-4)).